The following is a 174-amino-acid chain: Crossover junction endodeoxyribonuclease RuvC (174 aa).

Residues Asp8, Glu67, and Asp139 contribute to the active site. Mg(2+)-binding residues include Asp8, Glu67, and Asp139.

Belongs to the RuvC family. In terms of assembly, homodimer which binds Holliday junction (HJ) DNA. The HJ becomes 2-fold symmetrical on binding to RuvC with unstacked arms; it has a different conformation from HJ DNA in complex with RuvA. In the full resolvosome a probable DNA-RuvA(4)-RuvB(12)-RuvC(2) complex forms which resolves the HJ. Requires Mg(2+) as cofactor.

The protein resides in the cytoplasm. It carries out the reaction Endonucleolytic cleavage at a junction such as a reciprocal single-stranded crossover between two homologous DNA duplexes (Holliday junction).. Functionally, the RuvA-RuvB-RuvC complex processes Holliday junction (HJ) DNA during genetic recombination and DNA repair. Endonuclease that resolves HJ intermediates. Cleaves cruciform DNA by making single-stranded nicks across the HJ at symmetrical positions within the homologous arms, yielding a 5'-phosphate and a 3'-hydroxyl group; requires a central core of homology in the junction. The consensus cleavage sequence is 5'-(A/T)TT(C/G)-3'. Cleavage occurs on the 3'-side of the TT dinucleotide at the point of strand exchange. HJ branch migration catalyzed by RuvA-RuvB allows RuvC to scan DNA until it finds its consensus sequence, where it cleaves and resolves the cruciform DNA. The protein is Crossover junction endodeoxyribonuclease RuvC of Pseudomonas aeruginosa (strain LESB58).